A 355-amino-acid polypeptide reads, in one-letter code: MALRLLKLGATSASARVVAAGAQRVRGIHSSGQCKLPYGMWHFLLGDKASKRLTERSRVITVDGNICTGKGKLAKEIAEKLGFKHFPEAGIHYPDSTTGDGKPLAADYNGNCSLEKFYDDPRSNDGNSYRLQSWLYSSRLLQYSDALEHLLTTGQGVVLERSIFSDFVFLDAMYNQGFIRKQCVDHYNEVKSVTICDYLPPHLVIYIDVPVPEVQRRIQKKGDPHEMKITSAYLQDIENAYKKTFLPEMSEKCEVLQYSAREAQDSKKVVEDIEYLKFDKGPWLKQDNRTLYHLRLLVQDKFEVLNYTSIPIFLPEVTIGAHQTDRVLHQFRELPGRKYSPGYNTEVGDKWIWLK.

The N-terminal 35 residues, Met1–Lys35, are a transit peptide targeting the mitochondrion. Phosphoserine; by PINK1 is present on Ser250. Position 285 is an N6-succinyllysine (Lys285).

Belongs to the complex I NDUFA10 subunit family. Complex I is composed of 45 different subunits. This a component of the hydrophobic protein fraction. It depends on FAD as a cofactor. In terms of processing, phosphorylation at Ser-250 by PINK1 is required for the binding and/or reduction of the complex I substrate ubiquinone.

The protein localises to the mitochondrion matrix. Its function is as follows. Accessory subunit of the mitochondrial membrane respiratory chain NADH dehydrogenase (Complex I), that is believed not to be involved in catalysis. Complex I functions in the transfer of electrons from NADH to the respiratory chain. The immediate electron acceptor for the enzyme is believed to be ubiquinone. This chain is NADH dehydrogenase [ubiquinone] 1 alpha subcomplex subunit 10, mitochondrial (NDUFA10), found in Gorilla gorilla gorilla (Western lowland gorilla).